Consider the following 310-residue polypeptide: Nucleotide-binding protein Ddes_0972 (310 aa).

G30–S37 contacts ATP. D82 to Q85 serves as a coordination point for GTP.

The protein belongs to the RapZ-like family.

Its function is as follows. Displays ATPase and GTPase activities. The polypeptide is Nucleotide-binding protein Ddes_0972 (Desulfovibrio desulfuricans (strain ATCC 27774 / DSM 6949 / MB)).